The primary structure comprises 1217 residues: ATP-dependent helicase/nuclease subunit A (1217 aa).

A UvrD-like helicase ATP-binding domain is found at 10-475 (VIWTDAQWQS…IDLSQNFRSR (466 aa)). Residue 31–38 (AAAGSGKT) participates in ATP binding. A UvrD-like helicase C-terminal domain is found at 476-786 (KEVLSTTNYI…RMMTIHSSKG (311 aa)).

The protein belongs to the helicase family. AddA subfamily. Heterodimer of AddA and AddB/RexB. Mg(2+) is required as a cofactor.

It carries out the reaction Couples ATP hydrolysis with the unwinding of duplex DNA by translocating in the 3'-5' direction.. The enzyme catalyses ATP + H2O = ADP + phosphate + H(+). Its function is as follows. The heterodimer acts as both an ATP-dependent DNA helicase and an ATP-dependent, dual-direction single-stranded exonuclease. Recognizes the chi site generating a DNA molecule suitable for the initiation of homologous recombination. The AddA nuclease domain is required for chi fragment generation; this subunit has the helicase and 3' -&gt; 5' nuclease activities. The sequence is that of ATP-dependent helicase/nuclease subunit A from Staphylococcus aureus (strain Mu3 / ATCC 700698).